A 336-amino-acid chain; its full sequence is Phosphate acyltransferase (336 aa).

This sequence belongs to the PlsX family. In terms of assembly, homodimer. Probably interacts with PlsY.

The protein resides in the cytoplasm. It carries out the reaction a fatty acyl-[ACP] + phosphate = an acyl phosphate + holo-[ACP]. It functions in the pathway lipid metabolism; phospholipid metabolism. Catalyzes the reversible formation of acyl-phosphate (acyl-PO(4)) from acyl-[acyl-carrier-protein] (acyl-ACP). This enzyme utilizes acyl-ACP as fatty acyl donor, but not acyl-CoA. This is Phosphate acyltransferase from Pseudomonas aeruginosa (strain UCBPP-PA14).